A 346-amino-acid chain; its full sequence is Phosphoribosylformylglycinamidine cyclo-ligase (346 aa).

This sequence belongs to the AIR synthase family.

It localises to the cytoplasm. It carries out the reaction 2-formamido-N(1)-(5-O-phospho-beta-D-ribosyl)acetamidine + ATP = 5-amino-1-(5-phospho-beta-D-ribosyl)imidazole + ADP + phosphate + H(+). Its pathway is purine metabolism; IMP biosynthesis via de novo pathway; 5-amino-1-(5-phospho-D-ribosyl)imidazole from N(2)-formyl-N(1)-(5-phospho-D-ribosyl)glycinamide: step 2/2. This Brevibacillus brevis (strain 47 / JCM 6285 / NBRC 100599) protein is Phosphoribosylformylglycinamidine cyclo-ligase.